Here is a 1451-residue protein sequence, read N- to C-terminus: Copper-transporting ATPase 2 (1451 aa).

Over 1-646 the chain is Cytoplasmic; that stretch reads MPEQERKVTA…KTEIKQWKKS (646 aa). 3 HMA domains span residues 57–123, 142–208, and 256–322; these read TTGV…FEAS, AVVK…FEAA, and ATLP…PGYF. Positions 68, 71, 153, 156, 267, and 270 each coordinate Cu(+). Residues 328 to 353 form a disordered region; sequence DGLEKESGSSSVPSLGSSQRQQEPGP. Residues 335–345 show a composition bias toward low complexity; sequence GSSSVPSLGSS. Positions 355 to 421 constitute an HMA 4 domain; it reads RTAVLTITGI…AVEDMGFEVS (67 aa). Residues Ser-469, Ser-471, and Ser-474 each carry the phosphoserine modification. HMA domains are found at residues 481–547 and 557–623; these read QKCF…FEAA and GDIE…FHAS. Cu(+) is bound by residues Cys-492, Cys-495, Cys-568, and Cys-571. Residues 647–668 form a helical membrane-spanning segment; the sequence is FLCSLVFGIPVMGLMIYMLIPS. Residues 669–690 lie on the Extracellular side of the membrane; that stretch reads SKPHETMVLDHNIIPGLSVLNL. A helical membrane pass occupies residues 691-710; that stretch reads IFFILCTFVQFLGGWYFYVQ. Residues 711–717 lie on the Cytoplasmic side of the membrane; it reads AYKSLRH. The helical transmembrane segment at 718 to 738 threads the bilayer; it reads KSANMDVLIVLATTIAYAYSL. Topologically, residues 739–757 are extracellular; the sequence is VILVVAIAEKAEKSPVTFF. A helical transmembrane segment spans residues 758 to 778; the sequence is DTPPMLFVFIALGRWLEHVAK. Residues 779–912 are Cytoplasmic-facing; the sequence is SKTSEALAKL…KAPIQQLADR (134 aa). A helical transmembrane segment spans residues 913–935; sequence FSGYFVPFIIIISTLTLVVWIII. Topologically, residues 936 to 965 are extracellular; that stretch reads GFVDFGIVQKYFPSPSKHISQTEVIIRFAF. A helical transmembrane segment spans residues 966-987; that stretch reads QTSITVLCIACPCSLGLATPTA. Residues 988-1310 are Cytoplasmic-facing; it reads VMVGTGVAAQ…LSKRTVRRIR (323 aa). Residue Asp-1020 is the 4-aspartylphosphate intermediate of the active site. Residues Asp-1255 and Asp-1259 each coordinate Mg(2+). Residues 1311–1328 traverse the membrane as a helical segment; that stretch reads VNLVLALIYNMVGIPIAA. The Extracellular portion of the chain corresponds to 1329 to 1339; the sequence is GVFMPIGIVLQ. Residues 1340–1357 form a helical membrane-spanning segment; the sequence is PWMGSAAASSVSVVLSSL. Residues 1358 to 1451 lie on the Cytoplasmic side of the membrane; the sequence is QLKCYRKPDL…LSDRDEEQCI (94 aa). Ser-1384 and Ser-1443 each carry phosphoserine.

This sequence belongs to the cation transport ATPase (P-type) (TC 3.A.3) family. Type IB subfamily. As to quaternary structure, monomer. Interacts with COMMD1/MURR1. Interacts with DCTN4, in a copper-dependent manner. Interacts with ATOX1. Interacts (via C-terminus) with ZBTB16/PLZF. Expressed in brain, liver, kidney, spleen and stomach. In brain, detected in neuronal cells of the hippocampal formation, olfactory bulbs, cerebellum, cerebral cortex and nuclei in the brainstem. Isoform PINA is expressed during night in adult pineal gland (pinealocytes) and retina. Isoform PINA is not detected in other tissue.

Its subcellular location is the golgi apparatus. It is found in the trans-Golgi network membrane. It localises to the late endosome. It carries out the reaction Cu(+)(in) + ATP + H2O = Cu(+)(out) + ADP + phosphate + H(+). Its function is as follows. Copper ion transmembrane transporter involved in the export of copper out of the cells, such as the efflux of hepatic copper into the bile. This is Copper-transporting ATPase 2 (Atp7b) from Rattus norvegicus (Rat).